A 332-amino-acid polypeptide reads, in one-letter code: L-lactate dehydrogenase A chain (332 aa).

NAD(+)-binding positions include 29–57 (GAVG…VEDK) and Arg-99. 3 residues coordinate substrate: Arg-106, Asn-138, and Arg-169. An NAD(+)-binding site is contributed by Asn-138. His-193 serves as the catalytic Proton acceptor. Thr-248 contacts substrate.

It belongs to the LDH/MDH superfamily. LDH family. In terms of assembly, homotetramer.

It localises to the cytoplasm. The catalysed reaction is (S)-lactate + NAD(+) = pyruvate + NADH + H(+). Its pathway is fermentation; pyruvate fermentation to lactate; (S)-lactate from pyruvate: step 1/1. Functionally, interconverts simultaneously and stereospecifically pyruvate and lactate with concomitant interconversion of NADH and NAD(+). This is L-lactate dehydrogenase A chain (LDHA) from Alligator mississippiensis (American alligator).